Consider the following 392-residue polypeptide: Queuine tRNA-ribosyltransferase (392 aa).

Aspartate 93 acts as the Proton acceptor in catalysis. Substrate is bound by residues 93-97 (DSGGY), aspartate 147, glutamine 189, and glycine 216. Positions 247-253 (GVGAPED) are RNA binding. Residue aspartate 266 is the Nucleophile of the active site. The interval 271-275 (TRVAR) is RNA binding; important for wobble base 34 recognition. Positions 304, 306, 309, and 335 each coordinate Zn(2+).

This sequence belongs to the queuine tRNA-ribosyltransferase family. In terms of assembly, homodimer. Within each dimer, one monomer is responsible for RNA recognition and catalysis, while the other monomer binds to the replacement base PreQ1. Requires Zn(2+) as cofactor.

It catalyses the reaction 7-aminomethyl-7-carbaguanine + guanosine(34) in tRNA = 7-aminomethyl-7-carbaguanosine(34) in tRNA + guanine. Its pathway is tRNA modification; tRNA-queuosine biosynthesis. Functionally, catalyzes the base-exchange of a guanine (G) residue with the queuine precursor 7-aminomethyl-7-deazaguanine (PreQ1) at position 34 (anticodon wobble position) in tRNAs with GU(N) anticodons (tRNA-Asp, -Asn, -His and -Tyr). Catalysis occurs through a double-displacement mechanism. The nucleophile active site attacks the C1' of nucleotide 34 to detach the guanine base from the RNA, forming a covalent enzyme-RNA intermediate. The proton acceptor active site deprotonates the incoming PreQ1, allowing a nucleophilic attack on the C1' of the ribose to form the product. After dissociation, two additional enzymatic reactions on the tRNA convert PreQ1 to queuine (Q), resulting in the hypermodified nucleoside queuosine (7-(((4,5-cis-dihydroxy-2-cyclopenten-1-yl)amino)methyl)-7-deazaguanosine). This is Queuine tRNA-ribosyltransferase from Dehalococcoides mccartyi (strain ATCC BAA-2100 / JCM 16839 / KCTC 5957 / BAV1).